The following is a 378-amino-acid chain: Palmitoyltransferase PFA4 (378 aa).

The Cytoplasmic segment spans residues 1–9; sequence MPVKLRWPW. The chain crosses the membrane as a helical span at residues 10–30; that stretch reads LGIAIPTFLISFIGYGAHYFI. Residues 31-40 are Lumenal-facing; sequence LSNFLSVPKQ. A helical transmembrane segment spans residues 41–61; sequence ITFEFCLSMIWLSYYLAICTN. Over 62 to 119 the chain is Cytoplasmic; sequence PGRPLPNYKPPPDIWRNFCKKCQSYKPERSHHCKTCNQCVLMMDHHCPWTMNCVGFAN. Residues 78–128 enclose the DHHC domain; the sequence is NFCKKCQSYKPERSHHCKTCNQCVLMMDHHCPWTMNCVGFANYPHFLRFLF. The active-site S-palmitoyl cysteine intermediate is Cys108. Residues 120–140 form a helical membrane-spanning segment; it reads YPHFLRFLFWIIVTTSVLFCI. Topologically, residues 141–164 are lumenal; it reads QAKRIYFIWQQRHLPGYFFKKSEL. The chain crosses the membrane as a helical span at residues 165–185; that stretch reads IFLTISSPLNSFVLLTITILF. Over 186–378 the chain is Cytoplasmic; that stretch reads LRCLFNQILN…DDFGVDVDME (193 aa).

The protein belongs to the DHHC palmitoyltransferase family. PFA4 subfamily. In terms of processing, autopalmitoylated.

It localises to the endoplasmic reticulum membrane. The catalysed reaction is L-cysteinyl-[protein] + hexadecanoyl-CoA = S-hexadecanoyl-L-cysteinyl-[protein] + CoA. Functionally, mediates the reversible addition of palmitate to target proteins, thereby regulating their membrane association and biological function. Palmitoylates several amino acid permeases. Palmitoylates chitin synthase CHS3, which is required for its proper export from the ER. Can palmitoylate RAS2 in vitro. In Saccharomyces cerevisiae (strain ATCC 204508 / S288c) (Baker's yeast), this protein is Palmitoyltransferase PFA4.